We begin with the raw amino-acid sequence, 618 residues long: 2-succinyl-5-enolpyruvyl-6-hydroxy-3-cyclohexene-1-carboxylate synthase (618 aa).

The interval 192–215 (DPVAERGRDGPYVDVTPGSPEPGD) is disordered.

Belongs to the TPP enzyme family. MenD subfamily. In terms of assembly, homodimer. The cofactor is Mg(2+). Mn(2+) is required as a cofactor. It depends on thiamine diphosphate as a cofactor.

The enzyme catalyses isochorismate + 2-oxoglutarate + H(+) = 5-enolpyruvoyl-6-hydroxy-2-succinyl-cyclohex-3-ene-1-carboxylate + CO2. It participates in quinol/quinone metabolism; 1,4-dihydroxy-2-naphthoate biosynthesis; 1,4-dihydroxy-2-naphthoate from chorismate: step 2/7. It functions in the pathway quinol/quinone metabolism; menaquinone biosynthesis. Functionally, catalyzes the thiamine diphosphate-dependent decarboxylation of 2-oxoglutarate and the subsequent addition of the resulting succinic semialdehyde-thiamine pyrophosphate anion to isochorismate to yield 2-succinyl-5-enolpyruvyl-6-hydroxy-3-cyclohexene-1-carboxylate (SEPHCHC). This Halorubrum lacusprofundi (strain ATCC 49239 / DSM 5036 / JCM 8891 / ACAM 34) protein is 2-succinyl-5-enolpyruvyl-6-hydroxy-3-cyclohexene-1-carboxylate synthase.